The following is a 664-amino-acid chain: Protein-arginine deiminase type-3 (664 aa).

The protein belongs to the protein arginine deiminase family. It depends on Ca(2+) as a cofactor. As to expression, epidermis and hair follicles.

Its subcellular location is the cytoplasm. It carries out the reaction L-arginyl-[protein] + H2O = L-citrullyl-[protein] + NH4(+). Functionally, catalyzes the deimination of arginine residues of proteins. This chain is Protein-arginine deiminase type-3 (Padi3), found in Mus musculus (Mouse).